Reading from the N-terminus, the 306-residue chain is MIKQRTLKQATKVTGIGLHSGKKVTLTLRPAPANTGIVYARTDLEPAVYFPASAESIRDTQLCTCMINDDGVRISTVEHLNAAMASLGLDNLIVEVDAPEIPIMDGSASPFIYLLLDAGIEEQDAPKKFIRIRETVRVEEGDKWAEMKPYSKGLKLDFTIDFSHPMISKDVRNFKMELSAENFIHKISRARTFTFMKDVEYLQSIGLALGGSLDNAIVLDKYRILNEEGLRYKDELVKHKMLDSIGDLFMCGYNILGDFSAYKSGHGLNNKLLRAILANENAWEFVTFEDKEQAPEGYRIGEQVFI.

Zn(2+) is bound by residues His79, His239, and Asp243. His266 (proton donor) is an active-site residue.

It belongs to the LpxC family. Zn(2+) is required as a cofactor.

The enzyme catalyses a UDP-3-O-[(3R)-3-hydroxyacyl]-N-acetyl-alpha-D-glucosamine + H2O = a UDP-3-O-[(3R)-3-hydroxyacyl]-alpha-D-glucosamine + acetate. It participates in glycolipid biosynthesis; lipid IV(A) biosynthesis; lipid IV(A) from (3R)-3-hydroxytetradecanoyl-[acyl-carrier-protein] and UDP-N-acetyl-alpha-D-glucosamine: step 2/6. Functionally, catalyzes the hydrolysis of UDP-3-O-myristoyl-N-acetylglucosamine to form UDP-3-O-myristoylglucosamine and acetate, the committed step in lipid A biosynthesis. The sequence is that of UDP-3-O-acyl-N-acetylglucosamine deacetylase from Actinobacillus pleuropneumoniae serotype 7 (strain AP76).